The primary structure comprises 136 residues: 6,7-dimethyl-8-ribityllumazine synthase (136 aa).

Residues Phe-11, 43-45, and 67-69 contribute to the 5-amino-6-(D-ribitylamino)uracil site; these read VYD and CVI. 72–73 is a binding site for (2S)-2-hydroxy-3-oxobutyl phosphate; sequence DT. Residue His-75 is the Proton donor of the active site. 5-amino-6-(D-ribitylamino)uracil is bound at residue Leu-100. Arg-115 is a binding site for (2S)-2-hydroxy-3-oxobutyl phosphate.

Belongs to the DMRL synthase family. In terms of assembly, forms an icosahedral capsid composed of 60 subunits, arranged as a dodecamer of pentamers.

It carries out the reaction (2S)-2-hydroxy-3-oxobutyl phosphate + 5-amino-6-(D-ribitylamino)uracil = 6,7-dimethyl-8-(1-D-ribityl)lumazine + phosphate + 2 H2O + H(+). Its pathway is cofactor biosynthesis; riboflavin biosynthesis; riboflavin from 2-hydroxy-3-oxobutyl phosphate and 5-amino-6-(D-ribitylamino)uracil: step 1/2. Functionally, catalyzes the formation of 6,7-dimethyl-8-ribityllumazine by condensation of 5-amino-6-(D-ribitylamino)uracil with 3,4-dihydroxy-2-butanone 4-phosphate. This is the penultimate step in the biosynthesis of riboflavin. The chain is 6,7-dimethyl-8-ribityllumazine synthase from Methanococcus aeolicus (strain ATCC BAA-1280 / DSM 17508 / OCM 812 / Nankai-3).